Reading from the N-terminus, the 98-residue chain is Small ribosomal subunit protein bS20 (98 aa).

Residues 1-12 (MAPRKPSKKVGP) are compositionally biased toward basic residues. The interval 1-31 (MAPRKPSKKVGPQKRPSAEKRVITSKKKQLR) is disordered.

This sequence belongs to the bacterial ribosomal protein bS20 family.

Functionally, binds directly to 16S ribosomal RNA. The chain is Small ribosomal subunit protein bS20 from Chlamydia trachomatis serovar L2 (strain ATCC VR-902B / DSM 19102 / 434/Bu).